We begin with the raw amino-acid sequence, 768 residues long: MYRFLGLTIHGGLIKRGLDNSDTRVVSASMGFYGRCVSLGFANKLFDEMPKRDDLAWNEIVMVNLRSGNWEKAVELFREMQFSGAKAYDSTMVKLLQVCSNKEGFAEGRQIHGYVLRLGLESNVSMCNSLIVMYSRNGKLELSRKVFNSMKDRNLSSWNSILSSYTKLGYVDDAIGLLDEMEICGLKPDIVTWNSLLSGYASKGLSKDAIAVLKRMQIAGLKPSTSSISSLLQAVAEPGHLKLGKAIHGYILRNQLWYDVYVETTLIDMYIKTGYLPYARMVFDMMDAKNIVAWNSLVSGLSYACLLKDAEALMIRMEKEGIKPDAITWNSLASGYATLGKPEKALDVIGKMKEKGVAPNVVSWTAIFSGCSKNGNFRNALKVFIKMQEEGVGPNAATMSTLLKILGCLSLLHSGKEVHGFCLRKNLICDAYVATALVDMYGKSGDLQSAIEIFWGIKNKSLASWNCMLMGYAMFGRGEEGIAAFSVMLEAGMEPDAITFTSVLSVCKNSGLVQEGWKYFDLMRSRYGIIPTIEHCSCMVDLLGRSGYLDEAWDFIQTMSLKPDATIWGAFLSSCKIHRDLELAEIAWKRLQVLEPHNSANYMMMINLYSNLNRWEDVERIRNLMRNNRVRVQDLWSWIQIDQTVHIFYAEGKTHPDEGDIYFELYKLVSEMKKSGYVPDTSCIHQDISDSEKEKLLMGHTEKLAMTYGLIKKKGLAPIRVVKNTNICSDSHTVAKYMSVLRNREIVLQEGARVHHFRDGKCSCNDSW.

The N-terminal 25 residues, 1–25 (MYRFLGLTIHGGLIKRGLDNSDTRV), are a transit peptide targeting the mitochondrion. PPR repeat units follow at residues 22 to 52 (DTRVVSASMGFYGRCVSLGFANKLFDEMPKR), 53 to 87 (DDLAWNEIVMVNLRSGNWEKAVELFREMQFSGAKA), 88 to 122 (YDSTMVKLLQVCSNKEGFAEGRQIHGYVLRLGLES), 123 to 153 (NVSMCNSLIVMYSRNGKLELSRKVFNSMKDR), 154 to 188 (NLSSWNSILSSYTKLGYVDDAIGLLDEMEICGLKP), 189 to 223 (DIVTWNSLLSGYASKGLSKDAIAVLKRMQIAGLKP), 224 to 254 (STSSISSLLQAVAEPGHLKLGKAIHGYILRN), 259 to 289 (DVYVETTLIDMYIKTGYLPYARMVFDMMDAK), 290 to 324 (NIVAWNSLVSGLSYACLLKDAEALMIRMEKEGIKP), 325 to 359 (DAITWNSLASGYATLGKPEKALDVIGKMKEKGVAP), 360 to 394 (NVVSWTAIFSGCSKNGNFRNALKVFIKMQEEGVGP), 395 to 429 (NAATMSTLLKILGCLSLLHSGKEVHGFCLRKNLIC), 430 to 460 (DAYVATALVDMYGKSGDLQSAIEIFWGIKNK), 461 to 495 (SLASWNCMLMGYAMFGRGEEGIAAFSVMLEAGMEP), 496 to 526 (DAITFTSVLSVCKNSGLVQEGWKYFDLMRSR), and 532 to 562 (TIEHCSCMVDLLGRSGYLDEAWDFIQTMSLK). The interval 567-642 (IWGAFLSSCK…QDLWSWIQID (76 aa)) is type E motif. The type E(+) motif stretch occupies residues 643-673 (QTVHIFYAEGKTHPDEGDIYFELYKLVSEMK). The type DYW motif stretch occupies residues 674–768 (KSGYVPDTSC…DGKCSCNDSW (95 aa)).

This sequence belongs to the PPR family. PCMP-H subfamily.

Its subcellular location is the mitochondrion. This is Pentatricopeptide repeat-containing protein At4g01030, mitochondrial (PCMP-H65) from Arabidopsis thaliana (Mouse-ear cress).